The chain runs to 410 residues: uncharacterized protein (410 aa).

Transmembrane regions (helical) follow at residues 27–47, 63–83, 97–117, 118–138, 145–165, 180–200, 228–248, 254–274, 293–313, 316–332, 355–375, and 378–398; these read ILAL…VQSI, SLAL…TGPL, LFIA…ISIV, LLRA…MTYI, NSLS…GFLG, ISLM…LYFL, VLFF…TIFN, LMLE…TIYL, NNIL…TQYN, FIII…FFAS, YLFF…FFWF, and QWLG…FLSF.

This sequence belongs to the major facilitator superfamily.

Its subcellular location is the cell membrane. This is an uncharacterized protein from Buchnera aphidicola subsp. Acyrthosiphon pisum (strain APS) (Acyrthosiphon pisum symbiotic bacterium).